We begin with the raw amino-acid sequence, 572 residues long: Dihydroxy-acid dehydratase (572 aa).

Cys-54 is a [2Fe-2S] cluster binding site. Asp-86 lines the Mg(2+) pocket. A [2Fe-2S] cluster-binding site is contributed by Cys-127. Residues Asp-128 and Lys-129 each coordinate Mg(2+). An N6-carboxylysine modification is found at Lys-129. Residue Cys-199 participates in [2Fe-2S] cluster binding. Mg(2+) is bound at residue Glu-449. Ser-475 serves as the catalytic Proton acceptor.

Belongs to the IlvD/Edd family. In terms of assembly, homodimer. [2Fe-2S] cluster serves as cofactor. It depends on Mg(2+) as a cofactor.

It carries out the reaction (2R)-2,3-dihydroxy-3-methylbutanoate = 3-methyl-2-oxobutanoate + H2O. The enzyme catalyses (2R,3R)-2,3-dihydroxy-3-methylpentanoate = (S)-3-methyl-2-oxopentanoate + H2O. Its pathway is amino-acid biosynthesis; L-isoleucine biosynthesis; L-isoleucine from 2-oxobutanoate: step 3/4. The protein operates within amino-acid biosynthesis; L-valine biosynthesis; L-valine from pyruvate: step 3/4. Its function is as follows. Functions in the biosynthesis of branched-chain amino acids. Catalyzes the dehydration of (2R,3R)-2,3-dihydroxy-3-methylpentanoate (2,3-dihydroxy-3-methylvalerate) into 2-oxo-3-methylpentanoate (2-oxo-3-methylvalerate) and of (2R)-2,3-dihydroxy-3-methylbutanoate (2,3-dihydroxyisovalerate) into 2-oxo-3-methylbutanoate (2-oxoisovalerate), the penultimate precursor to L-isoleucine and L-valine, respectively. This chain is Dihydroxy-acid dehydratase, found in Pelagibacter ubique (strain HTCC1062).